Here is a 461-residue protein sequence, read N- to C-terminus: METLFNGTLLVGGRDQDSTGFAWWAGNARLINLSGKLLGAHVAHAGLIVFWAGAMNLFEVAHFVPEKPMYEQGLILLPHLATLGWGVGPGGEVIDTFPYFVSGVLHLISSAVLGFGGVYHSLIGPETLEESFPFFGYVWKDKNKMTTILGIHLILLGAGALLLVGKAMYFGGVYDTWAPGGGDVRVITNPTGNPATIFGYLLKSPFGGEGWICSVDNMEDIIGGHLWIGFICIAGGIWHILTKPFAWARRALVWSGEAYLSYSLGAVSVMAFTACCFVWFNNTAYPSEFYGPTGPEASQAQAFTFLVRDQRLGANVGSAQGPTGLGKYLMRSPTGEIIFGGETMRFWDLRAPWLEPLRGPNGLDLNKLRNDIQPWQERRSAEYMTHAPLGSLNSVGGVATEINAVNYVSPRSWLSTSHFVLGFFFFVAHLWHAGRARAAAAGFEKGIERETEPALSMKPLN.

A propeptide spanning residues 1-2 (ME) is cleaved from the precursor. An N-acetylthreonine modification is found at Thr-3. Thr-3 carries the post-translational modification Phosphothreonine. 5 consecutive transmembrane segments (helical) span residues 57–81 (LFEVAHFVPEKPMYEQGLILLPHLA), 122–143 (LIGPETLEESFPFFGYVWKDKN), 166–188 (KAMYFGGVYDTWAPGGGDVRVIT), 243–263 (KPFAWARRALVWSGEAYLSYS), and 279–300 (WFNNTAYPSEFYGPTGPEASQA). Glu-355 lines the [CaMn4O5] cluster pocket. The chain crosses the membrane as a helical span at residues 435–459 (RARAAAAGFEKGIERETEPALSMKP).

Belongs to the PsbB/PsbC family. PsbC subfamily. As to quaternary structure, PSII is composed of 1 copy each of membrane proteins PsbA, PsbB, PsbC, PsbD, PsbE, PsbF, PsbH, PsbI, PsbJ, PsbK, PsbL, PsbM, PsbT, PsbX, PsbY, PsbZ, Psb30/Ycf12, at least 3 peripheral proteins of the oxygen-evolving complex and a large number of cofactors. It forms dimeric complexes. Binds multiple chlorophylls and provides some of the ligands for the Ca-4Mn-5O cluster of the oxygen-evolving complex. It may also provide a ligand for a Cl- that is required for oxygen evolution. PSII binds additional chlorophylls, carotenoids and specific lipids. is required as a cofactor.

The protein resides in the plastid. It is found in the chloroplast thylakoid membrane. One of the components of the core complex of photosystem II (PSII). It binds chlorophyll and helps catalyze the primary light-induced photochemical processes of PSII. PSII is a light-driven water:plastoquinone oxidoreductase, using light energy to abstract electrons from H(2)O, generating O(2) and a proton gradient subsequently used for ATP formation. The protein is Photosystem II CP43 reaction center protein of Chlorokybus atmophyticus (Soil alga).